The chain runs to 316 residues: MSFSAKVKGEICRYIDISKEEALAQISAIMKVCGTLAFSGRQISFKMTTENPASARLMFTILKDYFDIHAKLMVKKSNSLKKNNIYMVVVTEEMGVKKLLEITGILREIDGIMSLDYHIDENLVDTEEKKKAYIRGAFIGGGSISNPEKTYHLEFVTHSQEYAEDLGKLINTFGLKAKVIQRKNSYIVYIKEGEQIVDLLNIIGAHTALLELENIRIMKEMRNNVNRLVNCETANLSKTVNAAVRQVESIKLIEREIGLARLPKNLREVAELRLTYPEESLKELGEMLEPPVGKSGVNHRLRKIEKIAEELRTGNF.

The H-T-H motif DNA-binding region spans 280–313 (SLKELGEMLEPPVGKSGVNHRLRKIEKIAEELRT).

The protein belongs to the WhiA family.

In terms of biological role, involved in cell division and chromosome segregation. The sequence is that of Probable cell division protein WhiA from Clostridium perfringens (strain ATCC 13124 / DSM 756 / JCM 1290 / NCIMB 6125 / NCTC 8237 / Type A).